A 392-amino-acid polypeptide reads, in one-letter code: Chorismate synthase (392 aa).

Positions 39 and 45 each coordinate NADP(+). FMN contacts are provided by residues 131–133, 255–256, G300, 315–319, and R341; these read RSS, NA, and KPIPT.

Belongs to the chorismate synthase family. As to quaternary structure, homotetramer. Requires FMNH2 as cofactor.

It catalyses the reaction 5-O-(1-carboxyvinyl)-3-phosphoshikimate = chorismate + phosphate. It functions in the pathway metabolic intermediate biosynthesis; chorismate biosynthesis; chorismate from D-erythrose 4-phosphate and phosphoenolpyruvate: step 7/7. Catalyzes the anti-1,4-elimination of the C-3 phosphate and the C-6 proR hydrogen from 5-enolpyruvylshikimate-3-phosphate (EPSP) to yield chorismate, which is the branch point compound that serves as the starting substrate for the three terminal pathways of aromatic amino acid biosynthesis. This reaction introduces a second double bond into the aromatic ring system. The sequence is that of Chorismate synthase from Leuconostoc citreum (strain KM20).